Consider the following 160-residue polypeptide: Urease accessory protein UreE (160 aa).

The protein belongs to the UreE family.

Its subcellular location is the cytoplasm. Functionally, involved in urease metallocenter assembly. Binds nickel. Probably functions as a nickel donor during metallocenter assembly. The polypeptide is Urease accessory protein UreE (Acinetobacter baumannii (strain ACICU)).